The following is a 183-amino-acid chain: Early E3 20.2 kDa glycoprotein (183 aa).

N-linked (GlcNAc...) asparagine; by host glycans are attached at residues asparagine 30, asparagine 73, asparagine 117, asparagine 134, and asparagine 135.

This sequence belongs to the adenoviridae E3_20 family.

This Homo sapiens (Human) protein is Early E3 20.2 kDa glycoprotein.